A 156-amino-acid chain; its full sequence is Transcription antitermination protein NusB (156 aa).

The protein belongs to the NusB family.

Its function is as follows. Involved in transcription antitermination. Required for transcription of ribosomal RNA (rRNA) genes. Binds specifically to the boxA antiterminator sequence of the ribosomal RNA (rrn) operons. The polypeptide is Transcription antitermination protein NusB (Rickettsia akari (strain Hartford)).